The following is a 335-amino-acid chain: MGCLLFLLLWALLQAWGSAEVPQRLFPLRCLQISSFANSSWTRTDGLAWLGELQTHSWSNDSDTVRSLKPWSQGTFSDQQWETLQHIFRVYRSSFTRDVKEFAKMLRLSYPLELQVSAGCEVHPGNASNNFFHVAFQGKDILSFQGTSWEPTQEAPLWVNLAIQVLNQDKWTRETVQWLLNGTCPQFVSGLLESGKSELEKQVKPKAWLSRGPSPGPGRLLLVCHVSGFYPKPVWVKWMRGEQEQQDTQPGDILPNADETWYLRATLDVAAGEAAGLSCRVKHSSLEGQDIILYWGGSYTSVGLIVLAVLACLLFLLIVGFTSRFKRQTSYQGVL.

Positions 1–19 (MGCLLFLLLWALLQAWGSA) are cleaved as a signal peptide. Over 20-301 (EVPQRLFPLR…ILYWGGSYTS (282 aa)) the chain is Extracellular. Residues N38 and N60 are each glycosylated (N-linked (GlcNAc...) asparagine). Position 98 (D98) interacts with a D-galactosylceramide. An N-linked (GlcNAc...) asparagine glycan is attached at N126. A D-galactosylceramide contacts are provided by residues D169, 169-172 (DKWT), and T172. A glycan (N-linked (GlcNAc...) asparagine) is linked at N181. The region spanning 185–292 (PQFVSGLLES…HSSLEGQDII (108 aa)) is the Ig-like domain. Residues 302–322 (VGLIVLAVLACLLFLLIVGFT) form a helical membrane-spanning segment. Over 323 to 335 (SRFKRQTSYQGVL) the chain is Cytoplasmic. Residues 331 to 334 (YQGV) carry the Internalization signal motif.

As to quaternary structure, heterodimer with B2M (beta-2-microglobulin). Interacts with MHC II.

The protein localises to the cell membrane. It is found in the basolateral cell membrane. Its subcellular location is the endosome membrane. The protein resides in the lysosome membrane. It localises to the endoplasmic reticulum membrane. Antigen-presenting protein that binds self and non-self glycolipids and presents them to T-cell receptors on natural killer T-cells. This is Antigen-presenting glycoprotein CD1d (CD1D) from Pan troglodytes (Chimpanzee).